A 371-amino-acid chain; its full sequence is GDP-mannose transporter (371 aa).

At 1–51 (MGVISFYLIGQLLYLIRKKYTTTYRQQQQHQYNMDSKHSTSSSSSGSLATR) the chain is on the cytoplasmic side. A helical membrane pass occupies residues 52–72 (ISNSGPISIAAYCLSSILMTV). The Lumenal segment spans residues 73–80 (TNKYVLSG). The helical transmembrane segment at 81–101 (FSFNLNFFLLAVQSIVCIVTI) threads the bilayer. The Cytoplasmic segment spans residues 102–121 (GSLKSLNIITYRQFNKDEAK). A helical transmembrane segment spans residues 122 to 138 (KWSPIAFLLVAMIYTSS). The Lumenal segment spans residues 139 to 145 (KALQYLS). A helical membrane pass occupies residues 146 to 162 (IPVYTIFKNLTIILIAY). Topologically, residues 163–171 (GEVIWFGGK) are cytoplasmic. A helical membrane pass occupies residues 172-192 (VTTMALSSFLLMVLSSVIAYY). Residues 193-206 (GDNAAVKSHDDAFA) lie on the Lumenal side of the membrane. A helical membrane pass occupies residues 207 to 227 (LYLGYFWMLTNCFASAAFVLI). Residues 228–241 (MRKRIKLTNFKDFD) lie on the Cytoplasmic side of the membrane. The chain crosses the membrane as a helical span at residues 242–262 (TMYYNNLLSIPILLICSFIFE). Residues 263–281 (DWSSANVSLNFPADNRVTT) lie on the Lumenal side of the membrane. An N-linked (GlcNAc...) asparagine glycan is attached at N268. Residues 282-302 (ITAMILSGASSVGISYCSAWC) traverse the membrane as a helical segment. At 303–309 (VRVTSST) the chain is on the cytoplasmic side. A helical membrane pass occupies residues 310 to 329 (TYSMVGALNKLPIALSGLIF). The Lumenal segment spans residues 330–332 (FEA). The chain crosses the membrane as a helical span at residues 333–355 (AVNFWSVSSIFVGFGAGLVYAVA). Over 356–371 (KQKQQKEQSQQLPTTK) the chain is Cytoplasmic.

Belongs to the TPT transporter family. SLC35D subfamily. As to quaternary structure, homooligomer.

It localises to the golgi apparatus membrane. It is found in the cytoplasmic vesicle membrane. Its subcellular location is the endoplasmic reticulum membrane. Its function is as follows. Involved in the import of GDP-mannose from the cytoplasm into the Golgi lumen. Involved in hyphal formation. The polypeptide is GDP-mannose transporter (VRG4) (Candida albicans (strain SC5314 / ATCC MYA-2876) (Yeast)).